A 298-amino-acid chain; its full sequence is Arginase (298 aa).

His-98, Asp-121, His-123, and Asp-125 together coordinate Mn(2+). Residues 123–127, 134–136, and Asp-177 contribute to the substrate site; these read HGDLN and SGN. Mn(2+) contacts are provided by Asp-225 and Asp-227. Substrate is bound by residues Thr-239 and Glu-270.

This sequence belongs to the arginase family. Mn(2+) serves as cofactor.

The enzyme catalyses L-arginine + H2O = urea + L-ornithine. Its pathway is nitrogen metabolism; urea cycle; L-ornithine and urea from L-arginine: step 1/1. The chain is Arginase (rocF) from Brevibacillus brevis (Bacillus brevis).